The sequence spans 117 residues: Large ribosomal subunit protein uL22 (117 aa).

It belongs to the universal ribosomal protein uL22 family. As to quaternary structure, part of the 50S ribosomal subunit.

Its function is as follows. This protein binds specifically to 23S rRNA; its binding is stimulated by other ribosomal proteins, e.g. L4, L17, and L20. It is important during the early stages of 50S assembly. It makes multiple contacts with different domains of the 23S rRNA in the assembled 50S subunit and ribosome. In terms of biological role, the globular domain of the protein is located near the polypeptide exit tunnel on the outside of the subunit, while an extended beta-hairpin is found that lines the wall of the exit tunnel in the center of the 70S ribosome. This Staphylococcus aureus (strain USA300) protein is Large ribosomal subunit protein uL22.